The primary structure comprises 232 residues: Enolase-phosphatase E1 (232 aa).

Belongs to the HAD-like hydrolase superfamily. MasA/MtnC family. In terms of assembly, monomer. Mg(2+) is required as a cofactor.

The catalysed reaction is 5-methylsulfanyl-2,3-dioxopentyl phosphate + H2O = 1,2-dihydroxy-5-(methylsulfanyl)pent-1-en-3-one + phosphate. The protein operates within amino-acid biosynthesis; L-methionine biosynthesis via salvage pathway; L-methionine from S-methyl-5-thio-alpha-D-ribose 1-phosphate: step 3/6. It functions in the pathway amino-acid biosynthesis; L-methionine biosynthesis via salvage pathway; L-methionine from S-methyl-5-thio-alpha-D-ribose 1-phosphate: step 4/6. Functionally, bifunctional enzyme that catalyzes the enolization of 2,3-diketo-5-methylthiopentyl-1-phosphate (DK-MTP-1-P) into the intermediate 2-hydroxy-3-keto-5-methylthiopentenyl-1-phosphate (HK-MTPenyl-1-P), which is then dephosphorylated to form the acireductone 1,2-dihydroxy-3-keto-5-methylthiopentene (DHK-MTPene). The polypeptide is Enolase-phosphatase E1 (Xanthomonas campestris pv. campestris (strain B100)).